Consider the following 288-residue polypeptide: Nucleotide-binding protein Neut_1559 (288 aa).

An ATP-binding site is contributed by Gly-8 to Ser-15. GTP is bound at residue Asp-57–Ser-60.

This sequence belongs to the RapZ-like family.

Its function is as follows. Displays ATPase and GTPase activities. This is Nucleotide-binding protein Neut_1559 from Nitrosomonas eutropha (strain DSM 101675 / C91 / Nm57).